We begin with the raw amino-acid sequence, 136 residues long: uncharacterized protein (136 aa).

A helical membrane pass occupies residues 102-118 (FVIVFFFFSFSLSISCV).

It is found in the membrane. This is an uncharacterized protein from Saccharomyces cerevisiae (strain ATCC 204508 / S288c) (Baker's yeast).